We begin with the raw amino-acid sequence, 400 residues long: Acetate kinase (400 aa).

Asn10 contributes to the Mg(2+) binding site. Lys17 is a binding site for ATP. Arg91 contributes to the substrate binding site. The active-site Proton donor/acceptor is the Asp148. Residues 208–212 (HLGNG), 283–285 (DCR), and 331–335 (GIGEN) each bind ATP. Residue Glu385 coordinates Mg(2+).

The protein belongs to the acetokinase family. As to quaternary structure, homodimer. The cofactor is Mg(2+). It depends on Mn(2+) as a cofactor.

It is found in the cytoplasm. It catalyses the reaction acetate + ATP = acetyl phosphate + ADP. It participates in metabolic intermediate biosynthesis; acetyl-CoA biosynthesis; acetyl-CoA from acetate: step 1/2. Catalyzes the formation of acetyl phosphate from acetate and ATP. Can also catalyze the reverse reaction. The chain is Acetate kinase from Shewanella frigidimarina (strain NCIMB 400).